The primary structure comprises 210 residues: Beta-crystallin A4 (210 aa).

Residues 1–25 (MSGMFSGSISETSGMSLQCTKSAGH) are N-terminal arm. 2 Beta/gamma crystallin 'Greek key' domains span residues 26–65 (WKIV…KVLS) and 66–112 (GAWV…RPVA). Residues 113–118 (CANHRD) form a connecting peptide region. 2 Beta/gamma crystallin 'Greek key' domains span residues 119–160 (SRLT…HVHS) and 161–209 (GAWV…RRIQ).

Belongs to the beta/gamma-crystallin family. As to quaternary structure, homo/heterodimer, or complexes of higher-order. The structure of beta-crystallin oligomers seems to be stabilized through interactions between the N-terminal arms.

Its function is as follows. Crystallins are the dominant structural components of the vertebrate eye lens. The chain is Beta-crystallin A4 (CRYBA4) from Bos taurus (Bovine).